A 367-amino-acid polypeptide reads, in one-letter code: Glycolate oxidase 1 (367 aa).

Position 1 is an N-acetylmethionine (M1). A glyoxylate-binding site is contributed by Y24. FMN is bound by residues 77–79 (PTA), S106, 127–129 (QLY), and T155. Y129 contacts glyoxylate. Residue R164 coordinates glyoxylate. FMN contacts are provided by K230 and S252. 2 residues coordinate glyoxylate: H254 and R257. H254 (proton acceptor) is an active-site residue. Residues 285–289 (DGGVR) and 308–309 (GR) contribute to the FMN site.

Belongs to the FMN-dependent alpha-hydroxy acid dehydrogenase family. Homotetramer. The cofactor is FMN.

The protein resides in the peroxisome. It carries out the reaction glycolate + O2 = glyoxylate + H2O2. It functions in the pathway photosynthesis; photorespiration; glycine from 2-phosphoglycolate: step 2/3. Its function is as follows. Catalyzes the oxidation of glycolate to glyoxylate, with a reduction of O2 to H2O2. Is a key enzyme in photorespiration in green plants. This chain is Glycolate oxidase 1 (GLO1), found in Arabidopsis thaliana (Mouse-ear cress).